Consider the following 173-residue polypeptide: Large ribosomal subunit protein uL10 (173 aa).

It belongs to the universal ribosomal protein uL10 family. Part of the ribosomal stalk of the 50S ribosomal subunit. The N-terminus interacts with L11 and the large rRNA to form the base of the stalk. The C-terminus forms an elongated spine to which L12 dimers bind in a sequential fashion forming a multimeric L10(L12)X complex.

Its function is as follows. Forms part of the ribosomal stalk, playing a central role in the interaction of the ribosome with GTP-bound translation factors. This is Large ribosomal subunit protein uL10 from Cupriavidus necator (strain ATCC 17699 / DSM 428 / KCTC 22496 / NCIMB 10442 / H16 / Stanier 337) (Ralstonia eutropha).